Here is a 515-residue protein sequence, read N- to C-terminus: 1-pyrroline-5-carboxylate dehydrogenase (515 aa).

Catalysis depends on residues glutamate 286 and cysteine 320.

It belongs to the aldehyde dehydrogenase family. RocA subfamily.

It catalyses the reaction L-glutamate 5-semialdehyde + NAD(+) + H2O = L-glutamate + NADH + 2 H(+). It participates in amino-acid degradation; L-proline degradation into L-glutamate; L-glutamate from L-proline: step 2/2. In Geobacillus thermodenitrificans (strain NG80-2), this protein is 1-pyrroline-5-carboxylate dehydrogenase.